The sequence spans 85 residues: UPF0335 protein BARBAKC583_0130 (85 aa).

It belongs to the UPF0335 family.

This chain is UPF0335 protein BARBAKC583_0130, found in Bartonella bacilliformis (strain ATCC 35685 / KC583 / Herrer 020/F12,63).